The sequence spans 410 residues: Cysteine desulfurase IscS (410 aa).

Pyridoxal 5'-phosphate is bound by residues 80 to 81 (AT), asparagine 160, glutamine 188, and 208 to 210 (SGH). The residue at position 211 (lysine 211) is an N6-(pyridoxal phosphate)lysine. Threonine 248 provides a ligand contact to pyridoxal 5'-phosphate. Cysteine 334 serves as the catalytic Cysteine persulfide intermediate. Cysteine 334 serves as a coordination point for [2Fe-2S] cluster.

It belongs to the class-V pyridoxal-phosphate-dependent aminotransferase family. NifS/IscS subfamily. In terms of assembly, homodimer. Forms a heterotetramer with IscU, interacts with other sulfur acceptors. The cofactor is pyridoxal 5'-phosphate.

The protein resides in the cytoplasm. It catalyses the reaction (sulfur carrier)-H + L-cysteine = (sulfur carrier)-SH + L-alanine. It functions in the pathway cofactor biosynthesis; iron-sulfur cluster biosynthesis. Functionally, master enzyme that delivers sulfur to a number of partners involved in Fe-S cluster assembly, tRNA modification or cofactor biosynthesis. Catalyzes the removal of elemental sulfur atoms from cysteine to produce alanine. Functions as a sulfur delivery protein for Fe-S cluster synthesis onto IscU, an Fe-S scaffold assembly protein, as well as other S acceptor proteins. The polypeptide is Cysteine desulfurase IscS (Rickettsia typhi (strain ATCC VR-144 / Wilmington)).